Consider the following 193-residue polypeptide: Xanthine phosphoribosyltransferase (193 aa).

2 residues coordinate xanthine: leucine 20 and asparagine 27. Residue 129-133 participates in 5-phospho-alpha-D-ribose 1-diphosphate binding; that stretch reads ANGKA. Residue lysine 157 coordinates xanthine.

The protein belongs to the purine/pyrimidine phosphoribosyltransferase family. Xpt subfamily. As to quaternary structure, homodimer.

It is found in the cytoplasm. The enzyme catalyses XMP + diphosphate = xanthine + 5-phospho-alpha-D-ribose 1-diphosphate. The protein operates within purine metabolism; XMP biosynthesis via salvage pathway; XMP from xanthine: step 1/1. In terms of biological role, converts the preformed base xanthine, a product of nucleic acid breakdown, to xanthosine 5'-monophosphate (XMP), so it can be reused for RNA or DNA synthesis. In Bifidobacterium longum (strain NCC 2705), this protein is Xanthine phosphoribosyltransferase.